The chain runs to 418 residues: tRNA-2-methylthio-N(6)-dimethylallyladenosine synthase (418 aa).

One can recognise an MTTase N-terminal domain in the interval 2–118 (PGYYLWTIGC…WREIPEGFIL (117 aa)). Residues C11, C47, C81, C134, C138, and C141 each coordinate [4Fe-4S] cluster. In terms of domain architecture, Radical SAM core spans 120-351 (LRPPVSANVT…EDLQKETVGK (232 aa)). The 69-residue stretch at 346–414 (KETVGKANAA…PWSLQAKLVN (69 aa)) folds into the TRAM domain.

Belongs to the methylthiotransferase family. MiaB subfamily. As to quaternary structure, monomer. [4Fe-4S] cluster is required as a cofactor.

It is found in the cytoplasm. The catalysed reaction is N(6)-dimethylallyladenosine(37) in tRNA + (sulfur carrier)-SH + AH2 + 2 S-adenosyl-L-methionine = 2-methylsulfanyl-N(6)-dimethylallyladenosine(37) in tRNA + (sulfur carrier)-H + 5'-deoxyadenosine + L-methionine + A + S-adenosyl-L-homocysteine + 2 H(+). In terms of biological role, catalyzes the methylthiolation of N6-(dimethylallyl)adenosine (i(6)A), leading to the formation of 2-methylthio-N6-(dimethylallyl)adenosine (ms(2)i(6)A) at position 37 in tRNAs that read codons beginning with uridine. The sequence is that of tRNA-2-methylthio-N(6)-dimethylallyladenosine synthase from Dehalococcoides mccartyi (strain ATCC BAA-2100 / JCM 16839 / KCTC 5957 / BAV1).